Here is a 476-residue protein sequence, read N- to C-terminus: Siroheme synthase 1 (476 aa).

The tract at residues 1–203 is precorrin-2 dehydrogenase /sirohydrochlorin ferrochelatase; it reads MDYLPIFADL…GQTAEAQRQL (203 aa). Residues 22–23 and 43–44 contribute to the NAD(+) site; these read EV and QS. Residue Ser128 is modified to Phosphoserine. Positions 219-476 are uroporphyrinogen-III C-methyltransferase; sequence GEIALVGAGP…VSRPAVVNLA (258 aa). Pro228 contributes to the S-adenosyl-L-methionine binding site. Asp251 serves as the catalytic Proton acceptor. Lys273 functions as the Proton donor in the catalytic mechanism. Residues 304–306, Ile309, 334–335, Met386, and Gly415 each bind S-adenosyl-L-methionine; these read GGD and TA.

It in the N-terminal section; belongs to the precorrin-2 dehydrogenase / sirohydrochlorin ferrochelatase family. This sequence in the C-terminal section; belongs to the precorrin methyltransferase family.

The enzyme catalyses uroporphyrinogen III + 2 S-adenosyl-L-methionine = precorrin-2 + 2 S-adenosyl-L-homocysteine + H(+). It catalyses the reaction precorrin-2 + NAD(+) = sirohydrochlorin + NADH + 2 H(+). The catalysed reaction is siroheme + 2 H(+) = sirohydrochlorin + Fe(2+). The protein operates within cofactor biosynthesis; adenosylcobalamin biosynthesis; precorrin-2 from uroporphyrinogen III: step 1/1. Its pathway is cofactor biosynthesis; adenosylcobalamin biosynthesis; sirohydrochlorin from precorrin-2: step 1/1. It participates in porphyrin-containing compound metabolism; siroheme biosynthesis; precorrin-2 from uroporphyrinogen III: step 1/1. It functions in the pathway porphyrin-containing compound metabolism; siroheme biosynthesis; siroheme from sirohydrochlorin: step 1/1. The protein operates within porphyrin-containing compound metabolism; siroheme biosynthesis; sirohydrochlorin from precorrin-2: step 1/1. Its function is as follows. Multifunctional enzyme that catalyzes the SAM-dependent methylations of uroporphyrinogen III at position C-2 and C-7 to form precorrin-2 via precorrin-1. Then it catalyzes the NAD-dependent ring dehydrogenation of precorrin-2 to yield sirohydrochlorin. Finally, it catalyzes the ferrochelation of sirohydrochlorin to yield siroheme. This chain is Siroheme synthase 1, found in Serratia proteamaculans (strain 568).